The following is a 124-amino-acid chain: Glutaredoxin-2 (124 aa).

Cys13 and Cys16 form a disulfide bridge.

This sequence belongs to the glutaredoxin family. Homodimer.

Its subcellular location is the host cytoplasm. In terms of biological role, glutaredoxin necessary for virion morphogenesis and virus replication. Functions as a thiol-disulfide transfer protein between membrane-associated OPG128 and substrates OPG095 or OPG053. The complete pathway for formation of disulfide bonds in intracellular virion membrane proteins sequentially involves oxidation of OPG072, OPG128 and OPG088. Exhibit thioltransferase and dehydroascorbate reductase activities in vitro. The polypeptide is Glutaredoxin-2 (OPG088) (Oryctolagus cuniculus (Rabbit)).